Consider the following 283-residue polypeptide: Pantothenate synthetase (283 aa).

Position 30–37 (30–37 (MGNLHAGH)) interacts with ATP. The Proton donor role is filled by H37. (R)-pantoate is bound at residue Q61. Q61 lines the beta-alanine pocket. 149 to 152 (GRKD) provides a ligand contact to ATP. (R)-pantoate is bound at residue Q155. 186–189 (LSSR) is an ATP binding site.

This sequence belongs to the pantothenate synthetase family. As to quaternary structure, homodimer.

Its subcellular location is the cytoplasm. The catalysed reaction is (R)-pantoate + beta-alanine + ATP = (R)-pantothenate + AMP + diphosphate + H(+). The protein operates within cofactor biosynthesis; (R)-pantothenate biosynthesis; (R)-pantothenate from (R)-pantoate and beta-alanine: step 1/1. Functionally, catalyzes the condensation of pantoate with beta-alanine in an ATP-dependent reaction via a pantoyl-adenylate intermediate. This chain is Pantothenate synthetase, found in Chromohalobacter salexigens (strain ATCC BAA-138 / DSM 3043 / CIP 106854 / NCIMB 13768 / 1H11).